The sequence spans 205 residues: Large ribosomal subunit protein uL4 (205 aa).

Residues 44 to 79 are disordered; the sequence is RAGTKAQKTRREVSGGGAKPWRQKGTGRARAGSSRS.

The protein belongs to the universal ribosomal protein uL4 family. As to quaternary structure, part of the 50S ribosomal subunit.

Functionally, one of the primary rRNA binding proteins, this protein initially binds near the 5'-end of the 23S rRNA. It is important during the early stages of 50S assembly. It makes multiple contacts with different domains of the 23S rRNA in the assembled 50S subunit and ribosome. Forms part of the polypeptide exit tunnel. In Coxiella burnetii (strain RSA 331 / Henzerling II), this protein is Large ribosomal subunit protein uL4.